The chain runs to 186 residues: Peptide deformylase (186 aa).

Fe cation contacts are provided by Cys94 and His136. Glu137 is a catalytic residue. His140 contributes to the Fe cation binding site.

This sequence belongs to the polypeptide deformylase family. Requires Fe(2+) as cofactor.

The enzyme catalyses N-terminal N-formyl-L-methionyl-[peptide] + H2O = N-terminal L-methionyl-[peptide] + formate. In terms of biological role, removes the formyl group from the N-terminal Met of newly synthesized proteins. Requires at least a dipeptide for an efficient rate of reaction. N-terminal L-methionine is a prerequisite for activity but the enzyme has broad specificity at other positions. This Prosthecochloris aestuarii (strain DSM 271 / SK 413) protein is Peptide deformylase.